A 359-amino-acid chain; its full sequence is Probable isoaspartyl peptidase/L-asparaginase 3 (359 aa).

Thr-224 functions as the Nucleophile in the catalytic mechanism. Substrate is bound by residues 252 to 255 and 275 to 278; these read RVGD and TGDG.

This sequence belongs to the Ntn-hydrolase family. As to quaternary structure, heterotetramer of two alpha and two beta chains arranged as a dimer of alpha/beta heterodimers. Post-translationally, cleaved into an alpha and beta chain by autocatalysis; this activates the enzyme. The N-terminal residue of the beta subunit is responsible for the nucleophile hydrolase activity.

It catalyses the reaction Cleavage of a beta-linked Asp residue from the N-terminus of a polypeptide.. Acts in asparagine catabolism but also in the final steps of protein degradation via hydrolysis of a range of isoaspartyl dipeptides. This chain is Probable isoaspartyl peptidase/L-asparaginase 3, found in Arabidopsis thaliana (Mouse-ear cress).